Consider the following 476-residue polypeptide: Glutamate--tRNA ligase (476 aa).

The short motif at 8-18 is the 'HIGH' region element; the sequence is PSPTGTLHIGT. The short motif at 247 to 251 is the 'KMSKS' region element; sequence KLSKR. Residue Lys-250 participates in ATP binding.

It belongs to the class-I aminoacyl-tRNA synthetase family. Glutamate--tRNA ligase type 1 subfamily. As to quaternary structure, monomer.

The protein localises to the cytoplasm. It carries out the reaction tRNA(Glu) + L-glutamate + ATP = L-glutamyl-tRNA(Glu) + AMP + diphosphate. Functionally, catalyzes the attachment of glutamate to tRNA(Glu) in a two-step reaction: glutamate is first activated by ATP to form Glu-AMP and then transferred to the acceptor end of tRNA(Glu). This Synechococcus sp. (strain WH7803) protein is Glutamate--tRNA ligase.